Reading from the N-terminus, the 395-residue chain is Flagellin D (395 aa).

It belongs to the bacterial flagellin family.

It is found in the secreted. Its subcellular location is the bacterial flagellum. In terms of biological role, flagellin is the subunit protein which polymerizes to form the filaments of bacterial flagella. The polypeptide is Flagellin D (flaD) (Rhizobium meliloti (Ensifer meliloti)).